Consider the following 621-residue polypeptide: Chaperone protein HtpG (621 aa).

Residues 1–341 (MSNQEYTFQT…SEDLPLNVSR (341 aa)) are a; substrate-binding. The segment at 342–547 (EILQQNKILA…GDEPNAMMAN (206 aa)) is b. Residues 548–621 (WMRQMGQSVP…RLNSVLLKAL (74 aa)) are c.

The protein belongs to the heat shock protein 90 family. In terms of assembly, homodimer.

It is found in the cytoplasm. Its function is as follows. Molecular chaperone. Has ATPase activity. In Helicobacter pylori (strain J99 / ATCC 700824) (Campylobacter pylori J99), this protein is Chaperone protein HtpG.